A 326-amino-acid polypeptide reads, in one-letter code: tRNA-modifying protein YgfZ (326 aa).

Tryptophan 27 and tryptophan 189 together coordinate folate.

The protein belongs to the tRNA-modifying YgfZ family.

It localises to the cytoplasm. In terms of biological role, folate-binding protein involved in regulating the level of ATP-DnaA and in the modification of some tRNAs. It is probably a key factor in regulatory networks that act via tRNA modification, such as initiation of chromosomal replication. The sequence is that of tRNA-modifying protein YgfZ from Shigella boydii serotype 18 (strain CDC 3083-94 / BS512).